The sequence spans 1083 residues: DNA primase (1083 aa).

The CHC2-type zinc-finger motif lies at 1022–1061 (CLRYPHRGGRTAPRTFVSLRVDHHNRLCISLAQQCFATKC).

It belongs to the herpesviridae DNA primase family. Associates with the helicase and the primase-associated factor to form the helicase-primase factor.

The protein localises to the host nucleus. Essential component of the helicase/primase complex. Unwinds the DNA at the replication forks and generates single-stranded DNA for both leading and lagging strand synthesis. The primase initiates primer synthesis and thereby produces large amount of short RNA primers on the lagging strand that the polymerase elongates using dNTPs. In Varicella-zoster virus (strain Oka vaccine) (HHV-3), this protein is DNA primase.